We begin with the raw amino-acid sequence, 122 residues long: Small ribosomal subunit protein bS6 (122 aa).

The tract at residues 95 to 122 is disordered; that stretch reads AETAPSPMMKEVQREEAKKAAAQSEQAA.

It belongs to the bacterial ribosomal protein bS6 family.

Functionally, binds together with bS18 to 16S ribosomal RNA. This chain is Small ribosomal subunit protein bS6, found in Ralstonia nicotianae (strain ATCC BAA-1114 / GMI1000) (Ralstonia solanacearum).